The chain runs to 41 residues: Large ribosomal subunit protein bL36 (41 aa).

It belongs to the bacterial ribosomal protein bL36 family.

This Rickettsia prowazekii (strain Madrid E) protein is Large ribosomal subunit protein bL36.